The sequence spans 201 residues: High mobility group protein homolog 068R (201 aa).

2 DNA-binding regions (HMG box) span residues Pro70–Lys138 and Thr143–Lys201.

It belongs to the IIV-6 401R family.

It is found in the host nucleus. The sequence is that of High mobility group protein homolog 068R from Invertebrate iridescent virus 3 (IIV-3).